Reading from the N-terminus, the 660-residue chain is Bifunctional polymyxin resistance protein ArnA (660 aa).

The segment at 1–304 (MKAIVFAYHD…DMSMVTDVRV (304 aa)) is formyltransferase ArnAFT. H104 acts as the Proton donor; for formyltransferase activity in catalysis. (6R)-10-formyltetrahydrofolate contacts are provided by residues R114 and 136–140 (VLKPD). The dehydrogenase ArnADH stretch occupies residues 314 to 660 (HRKRVLILGV…RGAVEELGKN (347 aa)). NAD(+)-binding positions include D347 and 368 to 369 (DI). UDP-alpha-D-glucuronate-binding positions include A393, Y398, and 432 to 433 (TS). E434 functions as the Proton acceptor; for decarboxylase activity in the catalytic mechanism. Residues R460, N492, 526 to 535 (KLVDGGEQKR), and Y613 contribute to the UDP-alpha-D-glucuronate site. The active-site Proton donor; for decarboxylase activity is the R619.

The protein in the N-terminal section; belongs to the Fmt family. UDP-L-Ara4N formyltransferase subfamily. In the C-terminal section; belongs to the NAD(P)-dependent epimerase/dehydratase family. UDP-glucuronic acid decarboxylase subfamily. Homohexamer, formed by a dimer of trimers.

It carries out the reaction UDP-alpha-D-glucuronate + NAD(+) = UDP-beta-L-threo-pentopyranos-4-ulose + CO2 + NADH. The catalysed reaction is UDP-4-amino-4-deoxy-beta-L-arabinose + (6R)-10-formyltetrahydrofolate = UDP-4-deoxy-4-formamido-beta-L-arabinose + (6S)-5,6,7,8-tetrahydrofolate + H(+). It functions in the pathway nucleotide-sugar biosynthesis; UDP-4-deoxy-4-formamido-beta-L-arabinose biosynthesis; UDP-4-deoxy-4-formamido-beta-L-arabinose from UDP-alpha-D-glucuronate: step 1/3. Its pathway is nucleotide-sugar biosynthesis; UDP-4-deoxy-4-formamido-beta-L-arabinose biosynthesis; UDP-4-deoxy-4-formamido-beta-L-arabinose from UDP-alpha-D-glucuronate: step 3/3. The protein operates within bacterial outer membrane biogenesis; lipopolysaccharide biosynthesis. In terms of biological role, bifunctional enzyme that catalyzes the oxidative decarboxylation of UDP-glucuronic acid (UDP-GlcUA) to UDP-4-keto-arabinose (UDP-Ara4O) and the addition of a formyl group to UDP-4-amino-4-deoxy-L-arabinose (UDP-L-Ara4N) to form UDP-L-4-formamido-arabinose (UDP-L-Ara4FN). The modified arabinose is attached to lipid A and is required for resistance to polymyxin and cationic antimicrobial peptides. This is Bifunctional polymyxin resistance protein ArnA from Photorhabdus laumondii subsp. laumondii (strain DSM 15139 / CIP 105565 / TT01) (Photorhabdus luminescens subsp. laumondii).